Consider the following 79-residue polypeptide: Defensin-like protein 117 (79 aa).

A signal peptide spans 1 to 24 (MTTTKTMLVAFVLTLFFVISSVHC). 4 disulfide bridges follow: C40–C75, C46–C68, C53–C73, and C57–C74.

Belongs to the DEFL family.

The protein resides in the secreted. The polypeptide is Defensin-like protein 117 (Arabidopsis thaliana (Mouse-ear cress)).